Here is a 387-residue protein sequence, read N- to C-terminus: Protein WHAT'S THIS FACTOR 9, mitochondrial (387 aa).

A mitochondrion-targeting transit peptide spans 1–24 (MLSIRRHAKTVASSCTNLTQKRTY). The region spanning 32–358 (KRDPYFDNIE…KKYIQLMKNS (327 aa)) is the PORR domain.

Its subcellular location is the mitochondrion. Its function is as follows. RNA-binding protein involved in group II intron splicing. Binds specific group II introns and promotes their splicing (e.g. rpl2 and ccmFC). This is Protein WHAT'S THIS FACTOR 9, mitochondrial from Arabidopsis thaliana (Mouse-ear cress).